The primary structure comprises 293 residues: 4-hydroxy-tetrahydrodipicolinate synthase (293 aa).

T44 contacts pyruvate. Y132 functions as the Proton donor/acceptor in the catalytic mechanism. Catalysis depends on K161, which acts as the Schiff-base intermediate with substrate. Position 205 (I205) interacts with pyruvate.

This sequence belongs to the DapA family. As to quaternary structure, homotetramer; dimer of dimers.

It is found in the cytoplasm. It carries out the reaction L-aspartate 4-semialdehyde + pyruvate = (2S,4S)-4-hydroxy-2,3,4,5-tetrahydrodipicolinate + H2O + H(+). It functions in the pathway amino-acid biosynthesis; L-lysine biosynthesis via DAP pathway; (S)-tetrahydrodipicolinate from L-aspartate: step 3/4. In terms of biological role, catalyzes the condensation of (S)-aspartate-beta-semialdehyde [(S)-ASA] and pyruvate to 4-hydroxy-tetrahydrodipicolinate (HTPA). In Thermosipho africanus (strain TCF52B), this protein is 4-hydroxy-tetrahydrodipicolinate synthase.